A 320-amino-acid chain; its full sequence is Methyltransferase gedG (320 aa).

Residues D61–C154 form a methyltransferase domain region. The disordered stretch occupies residues G231–Q252. Over residues P235–Q252 the composition is skewed to basic and acidic residues.

This sequence belongs to the methyltransferase superfamily.

The protein operates within secondary metabolite biosynthesis. Its function is as follows. Methyltransferase; part of the gene cluster that mediates the biosynthesis of geodin, an intermediate in the biosynthesis of other natural products. The pathway begins with the synthesis of atrochrysone thioester by the polyketide synthase (PKS) gedC. The atrochrysone carboxyl ACP thioesterase gedB then breaks the thioester bond and releases the atrochrysone carboxylic acid from gedC. The atrochrysone carboxylic acid is then converted to atrochrysone which is further transformed into emodinanthrone. The next step is performed by the emodinanthrone oxygenase gedH that catalyzes the oxidation of emodinanthrone to emodin. Emodin O-methyltransferase encoded probably by gedA then catalyzes methylation of the 8-hydroxy group of emodin to form questin. Ring cleavage of questin by questin oxidase gedK leads to desmethylsulochrin via several intermediates including questin epoxide. Another methylation step probably catalyzed by methyltransferase gedG leads to the formation of sulochrin which is further converted to dihydrogeodin by the sulochrin halogenase gedL. Finally, the dihydrogeodin oxidase gedJ catalyzes the stereospecific phenol oxidative coupling reaction converting dihydrogeodin to geodin. The protein is Methyltransferase gedG of Aspergillus terreus (strain NIH 2624 / FGSC A1156).